The sequence spans 372 residues: MAGTDREKALDAALAQIERQFGKGAVMRMGDRSKEPIEVIPTGSTALDVALGVGGLPRGRVIEVYGPESSGKTTLTLHAVANAQKAGGQVAFVDAEHALDPEYAQKLGVDIDNLILSQPDNGEQALEIVDMLVRSGALDLIVIDSVAALVPRAEIEGEMGDSHVGLQARLMSQALRKITSALNQSKTTAIFINQLREKIGVMFGSPETTTGGRALKFYASVRLDIRRIETLKDGTDAVGNRTRVKVVKNKVAPPFKQAEFDILYGQGISREGGLIDMGVEHGFVRKAGAWYTYEGDQLGQGKENARNFLKDNPDLANEIEKKIKEKLGVGVRPEEPTATESGPDAATAESAPAVPAPATAKVTKAKAAAAKS.

66–73 (GPESSGKT) serves as a coordination point for ATP. Residues 328–359 (GVGVRPEEPTATESGPDAATAESAPAVPAPAT) are disordered. Residues 345–359 (AATAESAPAVPAPAT) are compositionally biased toward low complexity.

The protein belongs to the RecA family.

Its subcellular location is the cytoplasm. In terms of biological role, can catalyze the hydrolysis of ATP in the presence of single-stranded DNA, the ATP-dependent uptake of single-stranded DNA by duplex DNA, and the ATP-dependent hybridization of homologous single-stranded DNAs. It interacts with LexA causing its activation and leading to its autocatalytic cleavage. The polypeptide is Protein RecA (Streptomyces ambofaciens).